Consider the following 563-residue polypeptide: Germacrene C/D synthase (563 aa).

Residues 1–22 (MESCLSVSSAPPPKKNIQEPVR) are disordered. Asp315, Asp319, and Glu468 together coordinate Mg(2+). Residues 315–319 (DDTYD) carry the DDXXD motif motif.

Belongs to the terpene synthase family. It depends on Mg(2+) as a cofactor. In terms of tissue distribution, predominantly expressed in root.

It catalyses the reaction (2E,6E)-farnesyl diphosphate = germacrene C + diphosphate. The catalysed reaction is (2E,6E)-farnesyl diphosphate = (-)-germacrene D + diphosphate. In terms of biological role, mediates formation of germacrene C and germacrene D using farnesyl diphosphate as substrate. Can also catalyze formation of trace of germacrene B. This chain is Germacrene C/D synthase (TPS1), found in Valeriana officinalis (Valerian).